Consider the following 152-residue polypeptide: SsrA-binding protein (152 aa).

The protein belongs to the SmpB family.

Its subcellular location is the cytoplasm. Required for rescue of stalled ribosomes mediated by trans-translation. Binds to transfer-messenger RNA (tmRNA), required for stable association of tmRNA with ribosomes. tmRNA and SmpB together mimic tRNA shape, replacing the anticodon stem-loop with SmpB. tmRNA is encoded by the ssrA gene; the 2 termini fold to resemble tRNA(Ala) and it encodes a 'tag peptide', a short internal open reading frame. During trans-translation Ala-aminoacylated tmRNA acts like a tRNA, entering the A-site of stalled ribosomes, displacing the stalled mRNA. The ribosome then switches to translate the ORF on the tmRNA; the nascent peptide is terminated with the 'tag peptide' encoded by the tmRNA and targeted for degradation. The ribosome is freed to recommence translation, which seems to be the essential function of trans-translation. The chain is SsrA-binding protein from Gloeobacter violaceus (strain ATCC 29082 / PCC 7421).